A 527-amino-acid chain; its full sequence is Probable glucomannan 4-beta-mannosyltransferase 9 (527 aa).

Residues 37–59 (AMSVMLFVEKVYMSVVLVGVHLF) form a helical membrane-spanning segment. Residue aspartate 131 is part of the active site. Substrate-binding residues include aspartate 190 and aspartate 192. Aspartate 284 is an active-site residue. A run of 4 helical transmembrane segments spans residues 363 to 383 (IIGH…TVLI), 399 to 419 (IVTI…IFWV), 478 to 498 (ALEL…IAYG), and 505 to 525 (FLFL…GTIV).

It belongs to the glycosyltransferase 2 family. Plant cellulose synthase-like A subfamily.

It localises to the golgi apparatus membrane. The catalysed reaction is GDP-mannose + (glucomannan)n = GDP + (glucomannan)n+1.. Probable mannan synthase which consists of a 4-beta-mannosyltransferase activity on mannan using GDP-mannose. The beta-1,4-mannan product is the backbone for galactomannan synthesis by galactomannan galactosyltransferase. Galactomannan is a noncellulosic polysaccharides of plant cell wall. The protein is Probable glucomannan 4-beta-mannosyltransferase 9 of Oryza sativa subsp. japonica (Rice).